The primary structure comprises 164 residues: Protein phosphatase 1 regulatory subunit 14C (164 aa).

Positions 1–19 are enriched in gly residues; that stretch reads MSVVTGGGEAAGGTSGGGA. The interval 1–72 is disordered; sequence MSVVTGGGEA…QRRHQQGKVT (72 aa). An N-acetylserine modification is found at serine 2. Position 25 is a phosphoserine (serine 25). Arginine 27 is modified (omega-N-methylarginine). Serine 33 carries the phosphoserine modification. Over residues 50–62 the composition is skewed to low complexity; it reads VATVAAAGQVQQQ. Threonine 72 carries the phosphothreonine; by ILK1 modification.

It belongs to the PP1 inhibitor family. Has over 600-fold higher inhibitory activity when phosphorylated, creating a molecular switch for regulating the phosphorylation status of PPP1CA substrates and smooth muscle contraction. The main inhibitory site appears to be Thr-72.

It is found in the endomembrane system. Its function is as follows. Inhibitor of the PP1 regulatory subunit PPP1CA. In Rattus norvegicus (Rat), this protein is Protein phosphatase 1 regulatory subunit 14C (Ppp1r14c).